The sequence spans 139 residues: Ribulose bisphosphate carboxylase small subunit, plasmid (139 aa).

The protein belongs to the RuBisCO small chain family. Heterohexadecamer of 8 large and 8 small subunits.

Functionally, ruBisCO catalyzes two reactions: the carboxylation of D-ribulose 1,5-bisphosphate, the primary event in carbon dioxide fixation, as well as the oxidative fragmentation of the pentose substrate. Both reactions occur simultaneously and in competition at the same active site. Although the small subunit is not catalytic it is essential for maximal activity. The sequence is that of Ribulose bisphosphate carboxylase small subunit, plasmid from Cupriavidus necator (strain ATCC 17699 / DSM 428 / KCTC 22496 / NCIMB 10442 / H16 / Stanier 337) (Ralstonia eutropha).